The chain runs to 284 residues: Tropomyosin Per a 7.0102 (284 aa).

Residues 1 to 266 (MDAIKKKMQA…EDELVHEKEK (266 aa)) are a coiled coil.

The protein belongs to the tropomyosin family. Homodimer. As to expression, expressed in striated skeletal muscle (at protein level).

Its function is as follows. Tropomyosin, in association with the troponin complex, plays a central role in the calcium dependent regulation of muscle contraction. This is Tropomyosin Per a 7.0102 from Periplaneta americana (American cockroach).